The primary structure comprises 400 residues: MLNSLDLEGRPQDTRVVVAMSGGVDSSVTAALLKSEGYDVVGITLQLYDHGAATHRKGACCAGQDIHDARNVAARLGVPHYVLDYESRFRETVIENFADSYASGETPVPCIECNRQVKFRDLLATARELGAAALATGHYVSSRRLADGSRALLCAADTDRDQSYFLFATTREQLDFLRFPLGDMTKQQTRELARRFGLSVADKHDSQDICFVPTGRYTDIISRLKPNAMVSGDIVDLDGHVIGHHEGIVHFTVGQRRGLGIASGAPLYVLSLDAANRRVVVGPREALKMHRIVLRDVNWIGDGALDRAIGAGLELFVRVRSTRRPQPAWLRVVDGRYEVELVAGEEGVSPGQACVFYDGAEGQSRVLGGGFIARAMAQRANEAAAQSGTLAQSFAAELRG.

ATP is bound by residues 19–26 (AMSGGVDS) and L45. C113 functions as the Nucleophile in the catalytic mechanism. A disulfide bridge links C113 with C210. ATP is bound at residue G137. The interaction with tRNA stretch occupies residues 160–162 (RDQ). C210 serves as the catalytic Cysteine persulfide intermediate.

The protein belongs to the MnmA/TRMU family.

Its subcellular location is the cytoplasm. The catalysed reaction is S-sulfanyl-L-cysteinyl-[protein] + uridine(34) in tRNA + AH2 + ATP = 2-thiouridine(34) in tRNA + L-cysteinyl-[protein] + A + AMP + diphosphate + H(+). In terms of biological role, catalyzes the 2-thiolation of uridine at the wobble position (U34) of tRNA, leading to the formation of s(2)U34. This is tRNA-specific 2-thiouridylase MnmA from Nitrobacter winogradskyi (strain ATCC 25391 / DSM 10237 / CIP 104748 / NCIMB 11846 / Nb-255).